The following is a 205-amino-acid chain: MNPNLNIEQDNASEIVAGVDEAGRGPLAGPVVAAAVVVNQSIMIDDIKDSKVLSKSKRESCYDKITNSYYYSIGIASVQEIDKYNILEATKLACIRAVKNLAIIPTKVLVDGNMNFTDNRFISIVRGDQICYSISSASIVAKVTRDRIMQILHKEYPVYGWNQNCGYGTKLHIDAIKTYGQTIHHRVSFKFKGNINHSAILGNMV.

Residues 14-201 (EIVAGVDEAG…KGNINHSAIL (188 aa)) enclose the RNase H type-2 domain. Positions 20, 21, and 111 each coordinate a divalent metal cation.

Belongs to the RNase HII family. The cofactor is Mn(2+). Requires Mg(2+) as cofactor.

Its subcellular location is the cytoplasm. The enzyme catalyses Endonucleolytic cleavage to 5'-phosphomonoester.. Endonuclease that specifically degrades the RNA of RNA-DNA hybrids. The chain is Ribonuclease HII from Orientia tsutsugamushi (strain Boryong) (Rickettsia tsutsugamushi).